The chain runs to 124 residues: MRYRAVFPMLIIVFALSGCTLSTINPMKKSRIDNIHHTQILFFSDENQIDQEAPYYDALLDLEKDYPEQIDKMKVYDKKEGWEDEIETVPTLMVVDQRHVVVKIEGCVKKKEDIIKPLQHVLSK.

A signal peptide spans 1–18; that stretch reads MRYRAVFPMLIIVFALSG. The N-palmitoyl cysteine moiety is linked to residue Cys-19. Cys-19 carries S-diacylglycerol cysteine lipidation.

The protein resides in the cell membrane. The protein is Pal-related lipoprotein (slp) of Bacillus subtilis (strain 168).